A 607-amino-acid polypeptide reads, in one-letter code: Chaperone protein dnaK (607 aa).

Positions 579–591 are enriched in polar residues; the sequence is KASETSNAKTNGK. The segment at 579–607 is disordered; it reads KASETSNAKTNGKASEKEDVIDADFKAQE. Over residues 592–607 the composition is skewed to basic and acidic residues; that stretch reads ASEKEDVIDADFKAQE.

This sequence belongs to the heat shock protein 70 family.

It localises to the plastid. It is found in the chloroplast. In terms of biological role, acts as a chaperone. The sequence is that of Chaperone protein dnaK from Cyanidioschyzon merolae (strain NIES-3377 / 10D) (Unicellular red alga).